Here is a 258-residue protein sequence, read N- to C-terminus: NH(3)-dependent NAD(+) synthetase (258 aa).

34 to 41 contributes to the ATP binding site; sequence GLSGGIDS. D40 contacts Mg(2+). R116 contributes to the deamido-NAD(+) binding site. ATP is bound at residue T136. Mg(2+) is bound at residue E141. ATP-binding residues include K165 and S187.

The protein belongs to the NAD synthetase family. As to quaternary structure, homodimer.

It catalyses the reaction deamido-NAD(+) + NH4(+) + ATP = AMP + diphosphate + NAD(+) + H(+). The protein operates within cofactor biosynthesis; NAD(+) biosynthesis; NAD(+) from deamido-NAD(+) (ammonia route): step 1/1. Catalyzes the ATP-dependent amidation of deamido-NAD to form NAD. Uses ammonia as a nitrogen source. In Fusobacterium nucleatum subsp. nucleatum (strain ATCC 25586 / DSM 15643 / BCRC 10681 / CIP 101130 / JCM 8532 / KCTC 2640 / LMG 13131 / VPI 4355), this protein is NH(3)-dependent NAD(+) synthetase.